The chain runs to 665 residues: Protein-arginine deiminase type-2 (665 aa).

Ca(2+) contacts are provided by Asp-123, Asp-125, Asp-127, Val-129, Glu-131, Asn-154, Asp-156, Glu-158, Asp-166, Asp-169, Lys-171, Asp-177, Asp-180, Glu-354, Asp-389, Phe-408, Leu-411, and Glu-412. Cys-647 (nucleophile) is an active-site residue.

Belongs to the protein arginine deiminase family. Homodimer. Requires Ca(2+) as cofactor. In terms of tissue distribution, detected in keratinocytes in epidermis (at protein level).

Its subcellular location is the cytoplasm. It carries out the reaction L-arginyl-[protein] + H2O = L-citrullyl-[protein] + NH4(+). Its function is as follows. Catalyzes the deimination of arginine residues of proteins. The protein is Protein-arginine deiminase type-2 (PADI2) of Homo sapiens (Human).